We begin with the raw amino-acid sequence, 113 residues long: Iron-sulfur cluster insertion protein ErpA (113 aa).

The iron-sulfur cluster site is built by C41, C105, and C107.

Belongs to the HesB/IscA family. Homodimer. Iron-sulfur cluster serves as cofactor.

Its function is as follows. Required for insertion of 4Fe-4S clusters for at least IspG. This chain is Iron-sulfur cluster insertion protein ErpA, found in Vibrio parahaemolyticus serotype O3:K6 (strain RIMD 2210633).